Reading from the N-terminus, the 716-residue chain is DNA ligase (716 aa).

NAD(+) contacts are provided by residues 42 to 46 (DAEYD), 91 to 92 (SL), and E125. The active-site N6-AMP-lysine intermediate is K127. The NAD(+) site is built by R148, E184, K300, and K324. Positions 429, 432, 447, and 453 each coordinate Zn(2+). Residues 638–716 (TASSPIAGKI…EEAWLQLIEG (79 aa)) enclose the BRCT domain.

It belongs to the NAD-dependent DNA ligase family. LigA subfamily. It depends on Mg(2+) as a cofactor. Mn(2+) serves as cofactor.

The catalysed reaction is NAD(+) + (deoxyribonucleotide)n-3'-hydroxyl + 5'-phospho-(deoxyribonucleotide)m = (deoxyribonucleotide)n+m + AMP + beta-nicotinamide D-nucleotide.. DNA ligase that catalyzes the formation of phosphodiester linkages between 5'-phosphoryl and 3'-hydroxyl groups in double-stranded DNA using NAD as a coenzyme and as the energy source for the reaction. It is essential for DNA replication and repair of damaged DNA. This is DNA ligase from Bartonella henselae (strain ATCC 49882 / DSM 28221 / CCUG 30454 / Houston 1) (Rochalimaea henselae).